The chain runs to 147 residues: NADH-quinone oxidoreductase subunit A (147 aa).

3 consecutive transmembrane segments (helical) span residues 11-31, 68-88, and 93-113; these read IWPL…VMAL, LIAV…AWAV, and LGWP…AALA.

The protein belongs to the complex I subunit 3 family. In terms of assembly, NDH-1 is composed of 14 different subunits. Subunits NuoA, H, J, K, L, M, N constitute the membrane sector of the complex.

The protein localises to the cell inner membrane. It carries out the reaction a quinone + NADH + 5 H(+)(in) = a quinol + NAD(+) + 4 H(+)(out). Functionally, NDH-1 shuttles electrons from NADH, via FMN and iron-sulfur (Fe-S) centers, to quinones in the respiratory chain. The immediate electron acceptor for the enzyme in this species is believed to be ubiquinone. Couples the redox reaction to proton translocation (for every two electrons transferred, four hydrogen ions are translocated across the cytoplasmic membrane), and thus conserves the redox energy in a proton gradient. The protein is NADH-quinone oxidoreductase subunit A of Nitrosospira multiformis (strain ATCC 25196 / NCIMB 11849 / C 71).